The following is a 272-amino-acid chain: Putative phosphoenolpyruvate synthase regulatory protein (272 aa).

152–159 (GVSRSGKT) is a binding site for ADP.

This sequence belongs to the pyruvate, phosphate/water dikinase regulatory protein family. PSRP subfamily.

It catalyses the reaction [pyruvate, water dikinase] + ADP = [pyruvate, water dikinase]-phosphate + AMP + H(+). The catalysed reaction is [pyruvate, water dikinase]-phosphate + phosphate + H(+) = [pyruvate, water dikinase] + diphosphate. Functionally, bifunctional serine/threonine kinase and phosphorylase involved in the regulation of the phosphoenolpyruvate synthase (PEPS) by catalyzing its phosphorylation/dephosphorylation. The polypeptide is Putative phosphoenolpyruvate synthase regulatory protein (Alcanivorax borkumensis (strain ATCC 700651 / DSM 11573 / NCIMB 13689 / SK2)).